Reading from the N-terminus, the 243-residue chain is 1-(5-phosphoribosyl)-5-[(5-phosphoribosylamino)methylideneamino] imidazole-4-carboxamide isomerase (243 aa).

Asp8 functions as the Proton acceptor in the catalytic mechanism. The Proton donor role is filled by Asp130.

Belongs to the HisA/HisF family.

It localises to the cytoplasm. It carries out the reaction 1-(5-phospho-beta-D-ribosyl)-5-[(5-phospho-beta-D-ribosylamino)methylideneamino]imidazole-4-carboxamide = 5-[(5-phospho-1-deoxy-D-ribulos-1-ylimino)methylamino]-1-(5-phospho-beta-D-ribosyl)imidazole-4-carboxamide. It functions in the pathway amino-acid biosynthesis; L-histidine biosynthesis; L-histidine from 5-phospho-alpha-D-ribose 1-diphosphate: step 4/9. The protein is 1-(5-phosphoribosyl)-5-[(5-phosphoribosylamino)methylideneamino] imidazole-4-carboxamide isomerase of Ruthia magnifica subsp. Calyptogena magnifica.